The chain runs to 114 residues: uncharacterized protein (114 aa).

The protein to E.coli YfiI and P.aeruginosa RluD.

This is an uncharacterized protein from Escherichia coli O6:H1 (strain CFT073 / ATCC 700928 / UPEC).